The primary structure comprises 378 residues: Tetraacyldisaccharide 4'-kinase (378 aa).

63 to 70 is a binding site for ATP; the sequence is AVGGAGKT.

The protein belongs to the LpxK family.

It carries out the reaction a lipid A disaccharide + ATP = a lipid IVA + ADP + H(+). It functions in the pathway glycolipid biosynthesis; lipid IV(A) biosynthesis; lipid IV(A) from (3R)-3-hydroxytetradecanoyl-[acyl-carrier-protein] and UDP-N-acetyl-alpha-D-glucosamine: step 6/6. Transfers the gamma-phosphate of ATP to the 4'-position of a tetraacyldisaccharide 1-phosphate intermediate (termed DS-1-P) to form tetraacyldisaccharide 1,4'-bis-phosphate (lipid IVA). This chain is Tetraacyldisaccharide 4'-kinase, found in Anaeromyxobacter dehalogenans (strain 2CP-C).